Here is a 569-residue protein sequence, read N- to C-terminus: Arginine--tRNA ligase (569 aa).

The short motif at 123-133 is the 'HIGH' region element; that stretch reads ANPNGPLHVGH.

It belongs to the class-I aminoacyl-tRNA synthetase family.

It is found in the cytoplasm. The enzyme catalyses tRNA(Arg) + L-arginine + ATP = L-arginyl-tRNA(Arg) + AMP + diphosphate. In Methanosarcina barkeri (strain Fusaro / DSM 804), this protein is Arginine--tRNA ligase.